The following is a 669-amino-acid chain: Dynamin-related protein 4C (669 aa).

The disordered stretch occupies residues 1–21; the sequence is MVKKKVATKKNSPSLAIAKKK. A Dynamin-type G domain is found at 62–323; that stretch reads GIHLPTIVVV…QSSMIARCLP (262 aa). Residues 72-79 are G1 motif; sequence GDQSSGKS. 72 to 79 contributes to the GTP binding site; that stretch reads GDQSSGKS. The interval 97-99 is G2 motif; that stretch reads CTR. Positions 171–174 are G3 motif; that stretch reads DLPG. GTP is bound by residues 171–175 and 240–243; these read DLPGI and TKAD. The interval 240-243 is G4 motif; that stretch reads TKAD. Residue Glu273 is a region of interest, G5 motif. Residues 575-669 form the GED domain; it reads AFDMKMRITS…AVAAIVDQNC (95 aa).

Belongs to the TRAFAC class dynamin-like GTPase superfamily. Dynamin/Fzo/YdjA family.

The protein resides in the cytoplasm. The protein localises to the cytoskeleton. Putative microtubule-associated force-producing protein, able to bind and hydrolyze GTP. The protein is Dynamin-related protein 4C (DRP4C) of Arabidopsis thaliana (Mouse-ear cress).